Here is a 328-residue protein sequence, read N- to C-terminus: Phenylalanine--tRNA ligase alpha subunit (328 aa).

Glutamate 245 serves as a coordination point for Mg(2+).

This sequence belongs to the class-II aminoacyl-tRNA synthetase family. Phe-tRNA synthetase alpha subunit type 1 subfamily. In terms of assembly, tetramer of two alpha and two beta subunits. Mg(2+) is required as a cofactor.

It localises to the cytoplasm. It catalyses the reaction tRNA(Phe) + L-phenylalanine + ATP = L-phenylalanyl-tRNA(Phe) + AMP + diphosphate + H(+). This is Phenylalanine--tRNA ligase alpha subunit from Helicobacter pylori (strain G27).